We begin with the raw amino-acid sequence, 264 residues long: Short-chain dehydrogenase/reductase malC (264 aa).

A helical transmembrane segment spans residues 13 to 35; it reads GKNVLIIGGTSGIGFAVAQLVIE. NADP(+) is bound by residues T22, S23, I25, S45, N46, K49, D75, N88, R130, V202, and T204. N249 is a glycosylation site (N-linked (GlcNAc...) asparagine).

Belongs to the short-chain dehydrogenases/reductases (SDR) family.

The protein localises to the membrane. The enzyme catalyses 1-hydroxy-3-{[2-(1,1-dimethylallyl)-indol-3-yl]methyl}-6H,7H,8H-5lambda(5)-pyrrolo[1,2-a]pyrazine + NADPH + H(+) = 1-hydroxy-3-{[2-(1,1-dimethylallyl)-indol-3-yl]methyl}-4H,6H,7H,8H-pyrrolo[1,2-a]pyrazine + NADP(+). The catalysed reaction is 1-hydroxy-3-{[2-(1,1-dimethylallyl)-indol-3-yl]methyl}-4H,6H,7H,8H-pyrrolo[1,2-a]pyrazine = (+)-premalbrancheamide. It functions in the pathway alkaloid biosynthesis. Its function is as follows. Short-chain dehydrogenase/reductase; part of the gene cluster that mediates the biosynthesis of malbrancheamide, a dichlorinated fungal indole alkaloid that belongs to a family of natural products containing a characteristic bicyclo[2.2.2]diazaoctane core. The first step of malbrancheamide biosynthesis involves coupling of L-proline and L-tryptophan by malG, a bimodular NRPS, to produce L-Pro-L-Trp aldehyde through reductive offloading. This compound undergoes spontaneous cyclization and dehydration to give a dienamine which is reverse prenylated at C-2 by malE. The other prenyltransferase present in the cluster, malB, displays modest activity, suggesting that may be a redundant gene in the pathway. Subsequently, a [4+2] Diels-Alder cyclo-addition catalyzed by the bifunctional enzyme malC forms the characteristic bicyclo[2.2.2]diazaoctane ring of premalbrancheamid. The first reaction catalyzed is a NADPH-dependent reduction reaction in which the nicotinamide cofactor is a stoichiometric reagent. Either NADH or NADPH is effective as a cofactor. NADP(+) is required for stereocontrolled formation of premalbrancheamide, however it does not appear to be required as a formal stoichiometric reagent because the second reaction performed by malC, the [4+2] cycloaddition, is a balanced chemical reaction without requirement for hydride transfer to balance the reaction. Finally, the flavin-dependent halogenase malA catalyzes the iterative dichlorination of the indole ring of premalbrancheamide to yield C-9 monochlorinated malbrancheamide B, C-8 monochlorinated isomalbrancheamide B, and dichlorinated malbrancheamide. MalA is also able to brominate premalbrancheamide at C-9 to yield malbrancheamide C, and, to a lesser extend, at C-8 to yield isomalbrancheamide C. Finally, malA can brominate C-9 monochlorinated malbrancheamide B at C-8 to yield malbrancheamide D, or C-8 monochlorinated isomalbrancheamide B at C-9 to produce isomalbrancheamide D. This is Short-chain dehydrogenase/reductase malC from Malbranchea aurantiaca.